Consider the following 202-residue polypeptide: ATP-dependent Clp protease proteolytic subunit 2 (202 aa).

The active-site Nucleophile is the Ser99. His124 is a catalytic residue.

This sequence belongs to the peptidase S14 family. In terms of assembly, fourteen ClpP subunits assemble into 2 heptameric rings which stack back to back to give a disk-like structure with a central cavity, resembling the structure of eukaryotic proteasomes.

It localises to the cytoplasm. It carries out the reaction Hydrolysis of proteins to small peptides in the presence of ATP and magnesium. alpha-casein is the usual test substrate. In the absence of ATP, only oligopeptides shorter than five residues are hydrolyzed (such as succinyl-Leu-Tyr-|-NHMec, and Leu-Tyr-Leu-|-Tyr-Trp, in which cleavage of the -Tyr-|-Leu- and -Tyr-|-Trp bonds also occurs).. Cleaves peptides in various proteins in a process that requires ATP hydrolysis. Has a chymotrypsin-like activity. Plays a major role in the degradation of misfolded proteins. In Desulfitobacterium hafniense (strain Y51), this protein is ATP-dependent Clp protease proteolytic subunit 2.